Consider the following 452-residue polypeptide: Na(+)/H(+) antiporter NhaA (452 aa).

11 consecutive transmembrane segments (helical) span residues 27–47 (FSGIFLFFCAVVAMISANSAL), 67–87 (FIGMSLHHWINDVLMSFFFLM), 108–128 (AFPAIAALGGMIVPAIVYTLF), 137–157 (GFGIPMATDIAFALGVLLLLG), 166–186 (VFLVSLAVVDDLGAVVVIAIF), 194–214 (LWLLYSVVILGLLIGLNKMGV), 216–236 (SLFPYAILGVLLWITVHNCGI), 314–334 (PWSAYFIMPVFAFANAGVAIS), 343–363 (GVLPGIMLGLIVGKPVGILGL), 381–401 (WIDILGAGMLAGIGFTMSIFI), and 414–434 (VAKIAILSASLFAGALGYFFI).

It belongs to the NhaA Na(+)/H(+) (TC 2.A.33) antiporter family.

It localises to the cell inner membrane. The catalysed reaction is Na(+)(in) + 2 H(+)(out) = Na(+)(out) + 2 H(+)(in). Its function is as follows. Na(+)/H(+) antiporter that extrudes sodium in exchange for external protons. This Wolinella succinogenes (strain ATCC 29543 / DSM 1740 / CCUG 13145 / JCM 31913 / LMG 7466 / NCTC 11488 / FDC 602W) (Vibrio succinogenes) protein is Na(+)/H(+) antiporter NhaA.